The chain runs to 473 residues: Glutamyl-tRNA reductase (473 aa).

Residues 49–52 (TCNR), serine 109, 114–116 (EQQ), and glutamine 120 each bind substrate. Cysteine 50 (nucleophile) is an active-site residue. 189–194 (GAGSMG) is an NADP(+) binding site. The segment at 445-473 (SGLDAGSGPQGADGPSAGPTPSAPNPSAE) is disordered.

The protein belongs to the glutamyl-tRNA reductase family. Homodimer.

The catalysed reaction is (S)-4-amino-5-oxopentanoate + tRNA(Glu) + NADP(+) = L-glutamyl-tRNA(Glu) + NADPH + H(+). It functions in the pathway porphyrin-containing compound metabolism; protoporphyrin-IX biosynthesis; 5-aminolevulinate from L-glutamyl-tRNA(Glu): step 1/2. Its function is as follows. Catalyzes the NADPH-dependent reduction of glutamyl-tRNA(Glu) to glutamate 1-semialdehyde (GSA). In Mycobacterium ulcerans (strain Agy99), this protein is Glutamyl-tRNA reductase.